The following is a 249-amino-acid chain: Aspartate/glutamate leucyltransferase (249 aa).

The protein belongs to the R-transferase family. Bpt subfamily.

It is found in the cytoplasm. The enzyme catalyses N-terminal L-glutamyl-[protein] + L-leucyl-tRNA(Leu) = N-terminal L-leucyl-L-glutamyl-[protein] + tRNA(Leu) + H(+). It catalyses the reaction N-terminal L-aspartyl-[protein] + L-leucyl-tRNA(Leu) = N-terminal L-leucyl-L-aspartyl-[protein] + tRNA(Leu) + H(+). In terms of biological role, functions in the N-end rule pathway of protein degradation where it conjugates Leu from its aminoacyl-tRNA to the N-termini of proteins containing an N-terminal aspartate or glutamate. This chain is Aspartate/glutamate leucyltransferase, found in Brucella abortus (strain 2308).